Reading from the N-terminus, the 150-residue chain is Ribosome maturation factor RimP (150 aa).

The protein belongs to the RimP family.

Its subcellular location is the cytoplasm. Required for maturation of 30S ribosomal subunits. This chain is Ribosome maturation factor RimP, found in Thermotoga sp. (strain RQ2).